A 722-amino-acid chain; its full sequence is MTELKPLLIELGTEELPVNALPNLSRAFFEGVLAGLEKRGIVVDHGEAKSLSTPRRLAVLLTAVAVEQPKQYRELFGPYLNTAFDTEGKPTKALEGFAAKCGVNWRTLERIRDTKGERFVHRVVVPGERTDALLPGILTEAIAGMPIPKPMRWGAHEYLFARPVHWLVMLLGQDVVEAEIMGVKAGRISRGHRFLYDKPVSLSDPQNYIDVLQAAYVLVDPAARRARIVAEIEAVARQVGGVARITEDNVAQVVNLVEWPSAVLCSFERVFLEVPQEALIQTMEVNQKFFPVLDSLGKLTEKFIGIANIESNDVAEVAKGYERVIRPRFSDAKFFFNEDLKQGLKAMGERLRTVTYHAKLGTLADKVARVLVLAEAIAPQIGVDPLLARRVALLSKNDLQSRMVNEFPELQGIAGHHYALISGELPEVAMAIEDAYRPRFSGDEIARSPLGKVLGLAERLDTLACGFAVGMKPTGNKDPFGLRRNALGLARTMIESRFDLDLKVLLDQASDWVAFATTIEQERHAQESVKQSKKEAAVKHSVPQVSDEKSARIEELYDFIVERLRGYYADKGIPTTHFNAVAELKPVSLYDFHRRLDAIGRFAALPEAEALAVANKRIRNILRKAEIKIPASVDATLFDQPAESGLLVALEGVITDTRSALDCKNYVSVLTCLARLRPPIDEFFDKVMVNDENLMLRANRLALLQRLGEYLCCVAAIEHLSN.

Belongs to the class-II aminoacyl-tRNA synthetase family. As to quaternary structure, tetramer of two alpha and two beta subunits.

It localises to the cytoplasm. It catalyses the reaction tRNA(Gly) + glycine + ATP = glycyl-tRNA(Gly) + AMP + diphosphate. In Xylella fastidiosa (strain 9a5c), this protein is Glycine--tRNA ligase beta subunit (glyS).